Reading from the N-terminus, the 163-residue chain is Glutathione peroxidase 2 (163 aa).

Cys-36 is a catalytic residue.

The protein belongs to the glutathione peroxidase family.

Its subcellular location is the cytoplasm. It carries out the reaction 2 glutathione + H2O2 = glutathione disulfide + 2 H2O. May constitute a glutathione peroxidase-like protective system against oxidative stresses. The chain is Glutathione peroxidase 2 (gpx-2) from Caenorhabditis elegans.